Reading from the N-terminus, the 298-residue chain is Lipoyl synthase 1 (298 aa).

[4Fe-4S] cluster-binding residues include Cys-34, Cys-39, Cys-45, Cys-60, Cys-64, Cys-67, and Ser-274. One can recognise a Radical SAM core domain in the interval 46–263; the sequence is FKAGTATFLI…RRAGEGMGFL (218 aa). The tract at residues 277-298 is disordered; the sequence is AEQVQRLMRSHPRTPKNQHSPE.

Belongs to the radical SAM superfamily. Lipoyl synthase family. Requires [4Fe-4S] cluster as cofactor.

The protein resides in the cytoplasm. It catalyses the reaction [[Fe-S] cluster scaffold protein carrying a second [4Fe-4S](2+) cluster] + N(6)-octanoyl-L-lysyl-[protein] + 2 oxidized [2Fe-2S]-[ferredoxin] + 2 S-adenosyl-L-methionine + 4 H(+) = [[Fe-S] cluster scaffold protein] + N(6)-[(R)-dihydrolipoyl]-L-lysyl-[protein] + 4 Fe(3+) + 2 hydrogen sulfide + 2 5'-deoxyadenosine + 2 L-methionine + 2 reduced [2Fe-2S]-[ferredoxin]. Its pathway is protein modification; protein lipoylation via endogenous pathway; protein N(6)-(lipoyl)lysine from octanoyl-[acyl-carrier-protein]: step 2/2. Functionally, catalyzes the radical-mediated insertion of two sulfur atoms into the C-6 and C-8 positions of the octanoyl moiety bound to the lipoyl domains of lipoate-dependent enzymes, thereby converting the octanoylated domains into lipoylated derivatives. This is Lipoyl synthase 1 from Gloeobacter violaceus (strain ATCC 29082 / PCC 7421).